The sequence spans 92 residues: Non-specific lipid-transfer protein A (92 aa).

4 disulfide bridges follow: Cys-3/Cys-51, Cys-13/Cys-28, Cys-29/Cys-74, and Cys-49/Cys-88.

Belongs to the plant LTP family.

Its function is as follows. Plant non-specific lipid-transfer proteins transfer phospholipids as well as galactolipids across membranes. May play a role in wax or cutin deposition in the cell walls of expanding epidermal cells and certain secretory tissues. The sequence is that of Non-specific lipid-transfer protein A from Ricinus communis (Castor bean).